A 193-amino-acid chain; its full sequence is Fe/S biogenesis protein NfuA (193 aa).

The [4Fe-4S] cluster site is built by Cys149 and Cys152.

It belongs to the NfuA family. In terms of assembly, homodimer. It depends on [4Fe-4S] cluster as a cofactor.

Functionally, involved in iron-sulfur cluster biogenesis. Binds a 4Fe-4S cluster, can transfer this cluster to apoproteins, and thereby intervenes in the maturation of Fe/S proteins. Could also act as a scaffold/chaperone for damaged Fe/S proteins. The sequence is that of Fe/S biogenesis protein NfuA from Psychromonas ingrahamii (strain DSM 17664 / CCUG 51855 / 37).